A 185-amino-acid chain; its full sequence is Elongation factor P (185 aa).

It belongs to the elongation factor P family.

The protein localises to the cytoplasm. The protein operates within protein biosynthesis; polypeptide chain elongation. In terms of biological role, involved in peptide bond synthesis. Stimulates efficient translation and peptide-bond synthesis on native or reconstituted 70S ribosomes in vitro. Probably functions indirectly by altering the affinity of the ribosome for aminoacyl-tRNA, thus increasing their reactivity as acceptors for peptidyl transferase. In Azoarcus sp. (strain BH72), this protein is Elongation factor P.